Consider the following 415-residue polypeptide: Serine hydroxymethyltransferase (415 aa).

Residues Leu120 and 124–126 (GHL) contribute to the (6S)-5,6,7,8-tetrahydrofolate site. Lys229 bears the N6-(pyridoxal phosphate)lysine mark.

This sequence belongs to the SHMT family. As to quaternary structure, homodimer. Requires pyridoxal 5'-phosphate as cofactor.

It localises to the cytoplasm. It carries out the reaction (6R)-5,10-methylene-5,6,7,8-tetrahydrofolate + glycine + H2O = (6S)-5,6,7,8-tetrahydrofolate + L-serine. The protein operates within one-carbon metabolism; tetrahydrofolate interconversion. It participates in amino-acid biosynthesis; glycine biosynthesis; glycine from L-serine: step 1/1. In terms of biological role, catalyzes the reversible interconversion of serine and glycine with tetrahydrofolate (THF) serving as the one-carbon carrier. This reaction serves as the major source of one-carbon groups required for the biosynthesis of purines, thymidylate, methionine, and other important biomolecules. Also exhibits THF-independent aldolase activity toward beta-hydroxyamino acids, producing glycine and aldehydes, via a retro-aldol mechanism. This chain is Serine hydroxymethyltransferase, found in Pelotomaculum thermopropionicum (strain DSM 13744 / JCM 10971 / SI).